The primary structure comprises 465 residues: Hepatocyte nuclear factor 6 (465 aa).

Disordered regions lie at residues 15 to 84 (GVSH…GPLH) and 119 to 141 (SDKF…HQRL). Residues 123 to 140 (PHHHHHHHHHHHPHHHQR) are compositionally biased toward basic residues. The CUT DNA-binding region spans 283-369 (GSNSGQMEEI…QRMSALRLAA (87 aa)). The homeobox DNA-binding region spans 385–444 (PKKPRLVFTDVQRRTLHAIFKENKRPSKELQITISQQLGLELSTVSNFFMNARRRSLDKW). Residues 443–465 (KWQDEGGSNSGSSSSSSSTCTKA) form a disordered region. The segment covering 448-465 (GGSNSGSSSSSSSTCTKA) has biased composition (low complexity).

The protein belongs to the CUT homeobox family. Binds DNA as a monomer.

It localises to the nucleus. Functionally, transcriptional activator. Binds the consensus sequence 5'-DHWATTGAYTWWD-3' on a variety of gene promoters such as those of HNF3B and TTR. Important for liver genes transcription. Stimulates the expression of Onecut3 in the developing endoderm. The protein is Hepatocyte nuclear factor 6 (Onecut1) of Mus musculus (Mouse).